We begin with the raw amino-acid sequence, 353 residues long: 3'(2'),5'-bisphosphate nucleotidase (353 aa).

D50 (proton acceptor) is an active-site residue. The Mg(2+) site is built by E73, D136, I138, and D139. Catalysis depends on T141, which acts as the Proton acceptor. The adenosine 3',5'-bisphosphate site is built by T141, H232, S256, K259, R273, and D286. 5 residues coordinate AMP: H232, S256, K259, R273, and D286. D286 is a binding site for Mg(2+).

The protein belongs to the inositol monophosphatase superfamily. Mg(2+) is required as a cofactor.

It carries out the reaction 3'-phosphoadenylyl sulfate + H2O = adenosine 5'-phosphosulfate + phosphate. The enzyme catalyses adenosine 3',5'-bisphosphate + H2O = AMP + phosphate. The catalysed reaction is adenosine 2',5'-bisphosphate + H2O = AMP + phosphate. It catalyses the reaction 1D-myo-inositol 1,4-bisphosphate + H2O = 1D-myo-inositol 4-phosphate + phosphate. It carries out the reaction 1D-myo-inositol 1,3,4-trisphosphate + H2O = 1D-myo-inositol 3,4-bisphosphate + phosphate. Its activity is regulated as follows. Inhibited by Li(+) and Na(+). In terms of biological role, phosphatase that converts adenosine 3'-phosphate 5'-phosphosulfate (PAPS) to adenosine 5'-phosphosulfate (APS) and 3'(2')-phosphoadenosine 5'-phosphate (PAP) to AMP. May regulate the flux of sulfur in the sulfur-activation pathway by converting PAPS to APS. Is also able to hydrolyze inositol 1,4-bisphosphate (Ins(1,4)P2) and inositol 1,3,4-trisphosphate (Ins(1,3,4)P3), but is not active on inositol 1,4,5-trisphosphate, inositol 1-phosphate, fructose 1,6-bisphosphate, AMP and ATP. Functionally, confers resistance to lithium. The polypeptide is 3'(2'),5'-bisphosphate nucleotidase (tol1) (Schizosaccharomyces pombe (strain 972 / ATCC 24843) (Fission yeast)).